A 413-amino-acid polypeptide reads, in one-letter code: RNA-binding protein 41 (413 aa).

Residues 223-235 show a composition bias toward polar residues; the sequence is SVGDSGTAESPSL. The segment at 223 to 247 is disordered; the sequence is SVGDSGTAESPSLLQDKGKQAAQGK. Ser232 carries the post-translational modification Phosphoserine. Residues 309–387 form the RRM domain; sequence KVLYLKNLSP…KILVIEFGKN (79 aa).

Functionally, may bind RNA. This chain is RNA-binding protein 41 (RBM41), found in Homo sapiens (Human).